Consider the following 451-residue polypeptide: Chromosomal replication initiator protein DnaA (451 aa).

Residues 1–71 (MSEKEIWDKV…QAIIYDVIGY (71 aa)) are domain I, interacts with DnaA modulators. The domain II stretch occupies residues 71 to 112 (YEVKPHFISEDELASYNNVNTQEVQEPQVQHSSIDDKTWGKE). The interval 113 to 329 (QFNMHNTFDT…GALTRLLAYS (217 aa)) is domain III, AAA+ region. ATP-binding residues include Gly157, Gly159, Lys160, and Thr161. The domain IV, binds dsDNA stretch occupies residues 330 to 451 (KLQGKPITTE…ENLEKEIRNQ (122 aa)).

This sequence belongs to the DnaA family. As to quaternary structure, oligomerizes as a right-handed, spiral filament on DNA at oriC.

Its subcellular location is the cytoplasm. Functionally, plays an essential role in the initiation and regulation of chromosomal replication. ATP-DnaA binds to the origin of replication (oriC) to initiate formation of the DNA replication initiation complex once per cell cycle. Binds the DnaA box (a 9 base pair repeat at the origin) and separates the double-stranded (ds)DNA. Forms a right-handed helical filament on oriC DNA; dsDNA binds to the exterior of the filament while single-stranded (ss)DNA is stabiized in the filament's interior. The ATP-DnaA-oriC complex binds and stabilizes one strand of the AT-rich DNA unwinding element (DUE), permitting loading of DNA polymerase. After initiation quickly degrades to an ADP-DnaA complex that is not apt for DNA replication. Binds acidic phospholipids. This is Chromosomal replication initiator protein DnaA from Staphylococcus epidermidis (strain ATCC 12228 / FDA PCI 1200).